We begin with the raw amino-acid sequence, 363 residues long: Ferrochelatase (363 aa).

2 residues coordinate Fe cation: His-209 and Glu-290.

Belongs to the ferrochelatase family.

The protein localises to the cytoplasm. It catalyses the reaction heme b + 2 H(+) = protoporphyrin IX + Fe(2+). The protein operates within porphyrin-containing compound metabolism; protoheme biosynthesis; protoheme from protoporphyrin-IX: step 1/1. Its function is as follows. Catalyzes the ferrous insertion into protoporphyrin IX. In Methylibium petroleiphilum (strain ATCC BAA-1232 / LMG 22953 / PM1), this protein is Ferrochelatase.